Consider the following 214-residue polypeptide: tRNA (guanine-N(7)-)-methyltransferase (214 aa).

S-adenosyl-L-methionine is bound by residues E43, E68, D95, and D117. D117 is an active-site residue. Substrate contacts are provided by residues K121, D153, and 190–193 (TEYE).

It belongs to the class I-like SAM-binding methyltransferase superfamily. TrmB family.

The catalysed reaction is guanosine(46) in tRNA + S-adenosyl-L-methionine = N(7)-methylguanosine(46) in tRNA + S-adenosyl-L-homocysteine. The protein operates within tRNA modification; N(7)-methylguanine-tRNA biosynthesis. In terms of biological role, catalyzes the formation of N(7)-methylguanine at position 46 (m7G46) in tRNA. The protein is tRNA (guanine-N(7)-)-methyltransferase of Staphylococcus aureus (strain Mu3 / ATCC 700698).